A 226-amino-acid chain; its full sequence is Endonuclease V (226 aa).

Mg(2+)-binding residues include aspartate 43 and aspartate 108.

The protein belongs to the endonuclease V family. The cofactor is Mg(2+).

It is found in the cytoplasm. The enzyme catalyses Endonucleolytic cleavage at apurinic or apyrimidinic sites to products with a 5'-phosphate.. Its function is as follows. DNA repair enzyme involved in the repair of deaminated bases. Selectively cleaves double-stranded DNA at the second phosphodiester bond 3' to a deoxyinosine leaving behind the intact lesion on the nicked DNA. The polypeptide is Endonuclease V (Thermosipho melanesiensis (strain DSM 12029 / CIP 104789 / BI429)).